A 285-amino-acid chain; its full sequence is Putative alkaline ceramidase dcd3B (285 aa).

The next 3 helical transmembrane spans lie at 34 to 54 (TFSS…MMSA), 77 to 97 (VLFS…YHAT), and 104 to 124 (LFDE…ILTI). An N-linked (GlcNAc...) asparagine glycan is attached at Asn-131. 4 helical membrane passes run 141–161 (RFLP…ITII), 166–186 (IILQ…SYMY), 200–220 (PKKF…SWLT), and 236–256 (LHAV…QFFI).

Belongs to the alkaline ceramidase family.

The protein resides in the membrane. This Dictyostelium discoideum (Social amoeba) protein is Putative alkaline ceramidase dcd3B (dcd3B).